We begin with the raw amino-acid sequence, 201 residues long: MSSAIVAKLNKEDIIKDTVKDLAFEILGELSVSYVDSDDIKLGNPMPMEATQAAPTIKFTPFDKSQLSAEDKLALLMTDPDAPSRTEHKWSEVCHYIITDIPVEYGPGGDIAISGKGVVRNNYIGPGPPKNSGYHRYVFFLCKQPKGADSSTFTKVENIISWGYGTPGAGAYDYIKENNLQLVGANYYMVENTTVDFNYDM.

The protein belongs to the phosphatidylethanolamine-binding protein family.

This is an uncharacterized protein from Saccharomyces cerevisiae (strain ATCC 204508 / S288c) (Baker's yeast).